The following is a 490-amino-acid chain: Protein nucleotidyltransferase YdiU (490 aa).

ATP-binding residues include Gly-94, Gly-96, Arg-97, Lys-117, Asp-129, Gly-130, Arg-180, and Arg-187. Asp-256 acts as the Proton acceptor in catalysis. Residues Asn-257 and Asp-266 each coordinate Mg(2+). Asp-266 provides a ligand contact to ATP.

The protein belongs to the SELO family. Mg(2+) serves as cofactor. Mn(2+) is required as a cofactor.

It catalyses the reaction L-seryl-[protein] + ATP = 3-O-(5'-adenylyl)-L-seryl-[protein] + diphosphate. It carries out the reaction L-threonyl-[protein] + ATP = 3-O-(5'-adenylyl)-L-threonyl-[protein] + diphosphate. The enzyme catalyses L-tyrosyl-[protein] + ATP = O-(5'-adenylyl)-L-tyrosyl-[protein] + diphosphate. The catalysed reaction is L-histidyl-[protein] + UTP = N(tele)-(5'-uridylyl)-L-histidyl-[protein] + diphosphate. It catalyses the reaction L-seryl-[protein] + UTP = O-(5'-uridylyl)-L-seryl-[protein] + diphosphate. It carries out the reaction L-tyrosyl-[protein] + UTP = O-(5'-uridylyl)-L-tyrosyl-[protein] + diphosphate. Its function is as follows. Nucleotidyltransferase involved in the post-translational modification of proteins. It can catalyze the addition of adenosine monophosphate (AMP) or uridine monophosphate (UMP) to a protein, resulting in modifications known as AMPylation and UMPylation. The chain is Protein nucleotidyltransferase YdiU from Clostridium perfringens (strain SM101 / Type A).